Reading from the N-terminus, the 941-residue chain is Zinc finger protein su(Hw) (941 aa).

Disordered regions lie at residues 1–97 (MSAS…APAA) and 176–211 (ENNN…NSSQ). Residues 47–57 (STTTTTSRTPS) are compositionally biased toward low complexity. Acidic residues predominate over residues 185–202 (VTEDDEDLGEDGDEDGED). A Phosphothreonine modification is found at T186. The C2H2-type 1; atypical zinc finger occupies 220 to 242 (HVCGKCYKTFRRVQSLKKHLEFC). A C2H2-type 2 zinc finger spans residues 290–313 (INCPDCPKSFKTQTSYERHIFITH). The segment at 319–341 (FPCSICNANLRSEALLALHEEQH) adopts a C2H2-type 3; atypical zinc-finger fold. 9 consecutive C2H2-type zinc fingers follow at residues 348 to 366 (YACK…LKRH), 380 to 402 (MSCK…LKQH), 413 to 435 (YMCH…IRTH), 441 to 463 (FDCD…RRYH), 469 to 491 (YSCT…MKRH), 497 to 519 (HKCD…SKTH), 523 to 545 (FPCE…VKTH), 553 to 577 (FSCA…EGKH), and 596 to 619 (TDCA…RTVH). The interval 760–860 (ILTEEDIKLK…PIDDVIEYVL (101 aa)) is interaction with mod(mdg4). The segment at 864–941 (DQDEGGLDKD…KKPVGEQEKA (78 aa)) is disordered. Composition is skewed to basic and acidic residues over residues 869 to 880 (GLDKDNESHSGD) and 891 to 941 (KTNE…QEKA).

As to quaternary structure, component of the gypsy chromatin insulator complex, composed of Cp190, mod(mdg4) and su(Hw). The gypsy chromatin insulator complex interacts with Topors via mod(mdg4) and su(Hw). Upon ecdysone stimulation, interacts with Nup98.

The protein localises to the nucleus. The protein resides in the chromosome. Functionally, component of the gypsy chromatin insulator complex which is required for the function of the gypsy chromatin insulator and other endogenous chromatin insulators. Chromatin insulators are regulatory elements which establish independent domains of transcriptional activity within eukaryotic genomes. Insulators have two defining properties; they can block the communication between an enhancer and a promoter when placed between them and can also buffer transgenes from position effect variegation (PEV). Insulators are proposed to structure the chromatin fiber into independent domains of differing transcriptional potential by promoting the formation of distinct chromatin loops. This chromatin looping may involve the formation of insulator bodies, where homotypic interactions between individual subunits of the insulator complex could promote the clustering of widely spaced insulators at the nuclear periphery. Within the gypsy insulator complex, this protein binds specifically to a region of the gypsy element located 3' of the 5' long terminal repeat (LTR), and may also mediate interaction with other endogenous insulators at sites distinct from those recognized by Cp190. Cooperates with pita and cliff to recruit Cp190 and regulate insulator function at the front-ultraabdominal (Fub) boundary. This Drosophila melanogaster (Fruit fly) protein is Zinc finger protein su(Hw).